Reading from the N-terminus, the 396-residue chain is Mannonate dehydratase (396 aa).

It belongs to the mannonate dehydratase family. Fe(2+) serves as cofactor. It depends on Mn(2+) as a cofactor.

It carries out the reaction D-mannonate = 2-dehydro-3-deoxy-D-gluconate + H2O. It functions in the pathway carbohydrate metabolism; pentose and glucuronate interconversion. Its function is as follows. Catalyzes the dehydration of D-mannonate. The protein is Mannonate dehydratase of Enterobacter sp. (strain 638).